Reading from the N-terminus, the 514-residue chain is Glutamyl-tRNA(Gln) amidotransferase subunit A (514 aa).

Residues Lys76 and Ser151 each act as charge relay system in the active site. Ser175 acts as the Acyl-ester intermediate in catalysis.

The protein belongs to the amidase family. GatA subfamily. Heterotrimer of A, B and C subunits.

It catalyses the reaction L-glutamyl-tRNA(Gln) + L-glutamine + ATP + H2O = L-glutaminyl-tRNA(Gln) + L-glutamate + ADP + phosphate + H(+). Allows the formation of correctly charged Gln-tRNA(Gln) through the transamidation of misacylated Glu-tRNA(Gln) in organisms which lack glutaminyl-tRNA synthetase. The reaction takes place in the presence of glutamine and ATP through an activated gamma-phospho-Glu-tRNA(Gln). This chain is Glutamyl-tRNA(Gln) amidotransferase subunit A, found in Salinibacter ruber (strain DSM 13855 / M31).